Reading from the N-terminus, the 263-residue chain is Putative alpha/beta hydrolase L404 (263 aa).

Glycine 2 is lipidated: N-myristoyl glycine; by host.

This sequence belongs to the AB hydrolase superfamily.

In Acanthamoeba polyphaga (Amoeba), this protein is Putative alpha/beta hydrolase L404.